The sequence spans 1210 residues: Homeodomain-interacting protein kinase 1 (1210 aa).

Lysine 25 is covalently cross-linked (Glycyl lysine isopeptide (Lys-Gly) (interchain with G-Cter in SUMO); alternate). A Glycyl lysine isopeptide (Lys-Gly) (interchain with G-Cter in SUMO2); alternate cross-link involves residue lysine 25. Residues lysine 120 and lysine 124 each participate in a glycyl lysine isopeptide (Lys-Gly) (interchain with G-Cter in SUMO2) cross-link. In terms of domain architecture, Protein kinase spans 190–518 (YEVLEFLGRG…PLKTLNHQFV (329 aa)). ATP is bound by residues 196–204 (LGRGTFGQV) and lysine 219. Aspartate 315 acts as the Proton acceptor in catalysis. Residues 835-856 (QQQSSSLPSKKNKQSAPVSSKS) are disordered. A Nuclear localization signal 1 (NLS1) motif is present at residues 844 to 847 (KKNK). Serine 872 is modified (phosphoserine). An interaction with TP53 region spans residues 885–1093 (PVQDQHQPII…FQHGSPLHST (209 aa)). Residues 891–998 (QPIIIPDTPS…PLKTQLGDCT (108 aa)) are required for localization to nuclear speckles. Residues 902-926 (PVSVITIRSDTDEEEDNKYKPNSSS) form an SUMO interaction motifs (SIM); required for nuclear localization and kinase activity region. Residues 938-981 (TVNDSPDSDSSLSSPHPTDTLSALRGNSGTLLEGPGRPAADGIG) form a disordered region. Low complexity predominate over residues 941–959 (DSPDSDSSLSSPHPTDTLS). Lysine 991 is covalently cross-linked (Glycyl lysine isopeptide (Lys-Gly) (interchain with G-Cter in SUMO2)). 2 disordered regions span residues 1046 to 1069 (LSQN…APRR) and 1084 to 1104 (FQHG…APAH). Composition is skewed to low complexity over residues 1047–1063 (SQNQ…ERSS) and 1095–1104 (HPHLAPAPAH). The residue at position 1200 (serine 1200) is a Phosphoserine. Lysine 1203 is covalently cross-linked (Glycyl lysine isopeptide (Lys-Gly) (interchain with G-Cter in SUMO)).

The protein belongs to the protein kinase superfamily. CMGC Ser/Thr protein kinase family. HIPK subfamily. Interacts with Nkx1-2, Nkx2-5, MYB, PARK7, DAXX and p53/TP53. Part of a cytoplasmic complex made of HIPK1, DAB2IP and MAP3K5 in response to TNF. This complex formation promotes MAP3K5-JNK activation and subsequent apoptosis. Post-translationally, phosphorylated and activated by JNK1. Autophosphorylated. Sumoylated. When conjugated it is directed to nuclear speckles. SENP1-mediated desumoylation is mediated by TNF in response to stress stimuli, triggering transient translocation from nucleus to cytoplasm. As to expression, ubiquitously expressed, with high levels in reproductive tissues. Expressed in the epithelial layer of mammary gland, uterus and epididymis, in the corpus luteum, and in post-meiotic round spermatids.

Its subcellular location is the nucleus. It localises to the cytoplasm. It is found in the nucleus speckle. It catalyses the reaction L-seryl-[protein] + ATP = O-phospho-L-seryl-[protein] + ADP + H(+). The catalysed reaction is L-threonyl-[protein] + ATP = O-phospho-L-threonyl-[protein] + ADP + H(+). In terms of biological role, serine/threonine-protein kinase involved in transcription regulation and TNF-mediated cellular apoptosis. Plays a role as a corepressor for homeodomain transcription factors. Phosphorylates DAXX and MYB. Phosphorylates DAXX in response to stress, and mediates its translocation from the nucleus to the cytoplasm. Inactivates MYB transcription factor activity by phosphorylation. Prevents MAP3K5-JNK activation in the absence of TNF. TNF triggers its translocation to the cytoplasm in response to stress stimuli, thus activating nuclear MAP3K5-JNK by derepression and promoting apoptosis. May be involved in anti-oxidative stress responses. Involved in the regulation of eye size, lens formation and retinal lamination during late embryogenesis. Promotes angiogenesis and to be involved in erythroid differentiation. May be involved in malignant squamous cell tumor formation. Phosphorylates PAGE4 at 'Thr-51' which is critical for the ability of PAGE4 to potentiate the transcriptional activator activity of JUN. The protein is Homeodomain-interacting protein kinase 1 (Hipk1) of Mus musculus (Mouse).